Here is a 58-residue protein sequence, read N- to C-terminus: MLGWVVTFLIIALVAGLLGFGGIAGASIEIAKIVFFIAIVLFAVSAVVGLMRGRRPMV.

The next 2 membrane-spanning stretches (helical) occupy residues 4 to 24 (WVVT…GGIA) and 30 to 50 (IAKI…VVGL).

It belongs to the UPF0391 family.

It is found in the cell membrane. This chain is UPF0391 membrane protein OCAR_5266/OCA5_c27040, found in Afipia carboxidovorans (strain ATCC 49405 / DSM 1227 / KCTC 32145 / OM5) (Oligotropha carboxidovorans).